Consider the following 1755-residue polypeptide: Transposon Ty1-PR1 Gag-Pol polyprotein (1755 aa).

Composition is skewed to polar residues over residues 1-23, 48-60, 71-93, and 127-152; these read MESQQLSQHSPISHGSACASVTS, TKANSQQTTTPAS, SPQTAQSHSPQNGPYPQQCMMTQ, and QSQFPQYPSSVGTPLSTPSPESGNTF. Disordered regions lie at residues 1–93, 126–173, and 352–421; these read MESQ…MMTQ, PQSQ…RPPP, and GSRN…SKST. Residues 153–165 show a composition bias toward low complexity; sequence TDSSSADSDMTST. Positions 299 to 401 are RNA-binding; sequence NNGIHINNKV…NSKSKTARAH (103 aa). Over residues 402-418 the composition is skewed to low complexity; the sequence is NVSTSNNSPSTDNDSIS. Position 416 is a phosphoserine (Ser-416). Catalysis depends on Asp-461, which acts as the For protease activity; shared with dimeric partner. Residues 583 to 640 are integrase-type zinc finger-like; that stretch reads NVHTSESTRKYPYPFIHRMLAHANAQTIRYSLKNNTITYFNESDVDWSSAIDYQCPDC. The region spanning 660 to 835 is the Integrase catalytic domain; sequence NSYEPFQYLH…AGLDISTLLP (176 aa). Residues Asp-671 and Asp-736 each coordinate Mg(2+). Disordered regions lie at residues 956–1087, 1092–1111, and 1130–1187; these read SKAV…ETEK, RSPSIDASPPENNSSHNIVP, and DLPL…DNET. The span at 960-969 shows a compositional bias: low complexity; it reads SPTDSTPPST. The segment covering 1005–1015 has biased composition (polar residues); it reads STPQISNIEST. Basic and acidic residues predominate over residues 1038–1053; sequence ESSHASKSKDFRHSDS. 2 stretches are compositionally biased toward polar residues: residues 1054 to 1082 and 1101 to 1111; these read YSENETNHTNVPISSTGGTNNKTVPQISD and PENNSSHNIVP. The Bipartite nuclear localization signal motif lies at 1178–1212; it reads KKRSLEDNETEIKVSRDTWNTKNMRSLEPPRSKKR. The region spanning 1338 to 1476 is the Reverse transcriptase Ty1/copia-type domain; the sequence is NNYYITQLDI…DILGLEIKYQ (139 aa). Mg(2+) contacts are provided by Asp-1346, Asp-1427, Asp-1428, Asp-1610, Glu-1652, and Asp-1685. The region spanning 1610–1752 is the RNase H Ty1/copia-type domain; it reads DASYGNQPYY…IKTFKLLTNK (143 aa).

The capsid protein forms a homotrimer, from which the VLPs are assembled. The protease is a homodimer, whose active site consists of two apposed aspartic acid residues. Initially, virus-like particles (VLPs) are composed of the structural unprocessed proteins Gag and Gag-Pol, and also contain the host initiator methionine tRNA (tRNA(i)-Met) which serves as a primer for minus-strand DNA synthesis, and a dimer of genomic Ty RNA. Processing of the polyproteins occurs within the particle and proceeds by an ordered pathway, called maturation. First, the protease (PR) is released by autocatalytic cleavage of the Gag-Pol polyprotein yielding capsid protein p45 and a Pol-p154 precursor protein. This cleavage is a prerequisite for subsequent processing of Pol-p154 at the remaining sites to release the mature structural and catalytic proteins. Maturation takes place prior to the RT reaction and is required to produce transposition-competent VLPs.

The protein localises to the cytoplasm. It localises to the nucleus. It catalyses the reaction DNA(n) + a 2'-deoxyribonucleoside 5'-triphosphate = DNA(n+1) + diphosphate. It carries out the reaction Endonucleolytic cleavage to 5'-phosphomonoester.. Functionally, capsid protein (CA) is the structural component of the virus-like particle (VLP), forming the shell that encapsulates the retrotransposons dimeric RNA genome. The particles are assembled from trimer-clustered units and there are holes in the capsid shells that allow for the diffusion of macromolecules. CA also has nucleocapsid-like chaperone activity, promoting primer tRNA(i)-Met annealing to the multipartite primer-binding site (PBS), dimerization of Ty1 RNA and initiation of reverse transcription. Its function is as follows. The aspartyl protease (PR) mediates the proteolytic cleavages of the Gag and Gag-Pol polyproteins after assembly of the VLP. Reverse transcriptase/ribonuclease H (RT) is a multifunctional enzyme that catalyzes the conversion of the retro-elements RNA genome into dsDNA within the VLP. The enzyme displays a DNA polymerase activity that can copy either DNA or RNA templates, and a ribonuclease H (RNase H) activity that cleaves the RNA strand of RNA-DNA heteroduplexes during plus-strand synthesis and hydrolyzes RNA primers. The conversion leads to a linear dsDNA copy of the retrotransposon that includes long terminal repeats (LTRs) at both ends. In terms of biological role, integrase (IN) targets the VLP to the nucleus, where a subparticle preintegration complex (PIC) containing at least integrase and the newly synthesized dsDNA copy of the retrotransposon must transit the nuclear membrane. Once in the nucleus, integrase performs the integration of the dsDNA into the host genome. This is Transposon Ty1-PR1 Gag-Pol polyprotein (TY1B-PR1) from Saccharomyces cerevisiae (strain ATCC 204508 / S288c) (Baker's yeast).